A 369-amino-acid chain; its full sequence is S-adenosylmethionine:tRNA ribosyltransferase-isomerase (369 aa).

It belongs to the QueA family. Monomer.

Its subcellular location is the cytoplasm. The enzyme catalyses 7-aminomethyl-7-carbaguanosine(34) in tRNA + S-adenosyl-L-methionine = epoxyqueuosine(34) in tRNA + adenine + L-methionine + 2 H(+). The protein operates within tRNA modification; tRNA-queuosine biosynthesis. In terms of biological role, transfers and isomerizes the ribose moiety from AdoMet to the 7-aminomethyl group of 7-deazaguanine (preQ1-tRNA) to give epoxyqueuosine (oQ-tRNA). The chain is S-adenosylmethionine:tRNA ribosyltransferase-isomerase from Synechococcus sp. (strain CC9311).